Here is a 399-residue protein sequence, read N- to C-terminus: Phosphoglycerate kinase (399 aa).

Substrate contacts are provided by residues 21 to 23, arginine 36, 59 to 62, arginine 120, and arginine 158; these read DFN and HLGR. ATP contacts are provided by residues lysine 209, glycine 297, glutamate 328, and 355 to 358; that span reads GGDS.

The protein belongs to the phosphoglycerate kinase family. As to quaternary structure, monomer.

It localises to the cytoplasm. It carries out the reaction (2R)-3-phosphoglycerate + ATP = (2R)-3-phospho-glyceroyl phosphate + ADP. It functions in the pathway carbohydrate degradation; glycolysis; pyruvate from D-glyceraldehyde 3-phosphate: step 2/5. This is Phosphoglycerate kinase from Streptococcus thermophilus (strain ATCC BAA-491 / LMD-9).